We begin with the raw amino-acid sequence, 389 residues long: Large ribosomal subunit protein uL3 (389 aa).

This sequence belongs to the universal ribosomal protein uL3 family.

The protein resides in the cytoplasm. This chain is Large ribosomal subunit protein uL3 (RPL3), found in Debaryomyces hansenii (strain ATCC 36239 / CBS 767 / BCRC 21394 / JCM 1990 / NBRC 0083 / IGC 2968) (Yeast).